A 228-amino-acid chain; its full sequence is 2,3-bisphosphoglycerate-dependent phosphoglycerate mutase (228 aa).

Substrate contacts are provided by residues 8–15 (RHGQSQWN), 21–22 (TG), Arg60, 87–90 (ERHY), Lys98, 114–115 (RR), and 180–181 (GN). His9 functions as the Tele-phosphohistidine intermediate in the catalytic mechanism. Glu87 acts as the Proton donor/acceptor in catalysis.

Belongs to the phosphoglycerate mutase family. BPG-dependent PGAM subfamily. Homodimer.

It catalyses the reaction (2R)-2-phosphoglycerate = (2R)-3-phosphoglycerate. Its pathway is carbohydrate degradation; glycolysis; pyruvate from D-glyceraldehyde 3-phosphate: step 3/5. Catalyzes the interconversion of 2-phosphoglycerate and 3-phosphoglycerate. This chain is 2,3-bisphosphoglycerate-dependent phosphoglycerate mutase, found in Erythrobacter litoralis (strain HTCC2594).